Consider the following 35-residue polypeptide: Endochitinase 2 (35 aa).

This sequence belongs to the glycosyl hydrolase 19 family. Chitinase class I subfamily.

It catalyses the reaction Random endo-hydrolysis of N-acetyl-beta-D-glucosaminide (1-&gt;4)-beta-linkages in chitin and chitodextrins.. Defense against chitin-containing fungal pathogens. The protein is Endochitinase 2 of Capsicum chinense (Scotch bonnet).